The sequence spans 102 residues: Ferredoxin-thioredoxin reductase, catalytic chain (102 aa).

Cys-53 contributes to the [4Fe-4S] cluster binding site. The active-site Nucleophile is Cys-55. Cys-55 and Cys-85 form a disulfide bridge. [4Fe-4S] cluster contacts are provided by Cys-72, Cys-74, and Cys-83.

This sequence belongs to the ferredoxin thioredoxin reductase beta subunit family. In terms of assembly, heterodimer of subunit A (variable subunit) and subunit B (catalytic subunit). Heterodimeric FTR forms a complex with ferredoxin and thioredoxin. The cofactor is [4Fe-4S] cluster.

The protein resides in the plastid. It is found in the chloroplast. It carries out the reaction [thioredoxin]-disulfide + 2 reduced [2Fe-2S]-[ferredoxin] + 2 H(+) = [thioredoxin]-dithiol + 2 oxidized [2Fe-2S]-[ferredoxin]. Functionally, catalytic subunit of the ferredoxin-thioredoxin reductase (FTR), which catalyzes the two-electron reduction of thioredoxins by the electrons provided by reduced ferredoxin. The sequence is that of Ferredoxin-thioredoxin reductase, catalytic chain (ftrB) from Guillardia theta (Cryptophyte).